Reading from the N-terminus, the 403-residue chain is Ribosomal RNA large subunit methyltransferase I (403 aa).

Residues 9-88 (YPRLVLSKGR…ESIDIAFFTR (80 aa)) enclose the PUA domain.

It belongs to the methyltransferase superfamily. RlmI family.

It localises to the cytoplasm. It carries out the reaction cytidine(1962) in 23S rRNA + S-adenosyl-L-methionine = 5-methylcytidine(1962) in 23S rRNA + S-adenosyl-L-homocysteine + H(+). In terms of biological role, specifically methylates the cytosine at position 1962 (m5C1962) of 23S rRNA. This is Ribosomal RNA large subunit methyltransferase I from Salmonella agona (strain SL483).